The following is a 775-amino-acid chain: MSTISEVGPWELGLSLGSGGPNSSRLAKHRETGQLAVVKPIVGWSELTSSQQARIEGELVLLRLIEHPNVLQLIDVISAQEQLFVVVEYMPGGELFDCMLRKGSFTEQDTAKFLWQILCGLEYCHKLHICHRDLKPENLYLDAHGSIKIGEFGMASIQQPGKLLQTSCGSPHYASPEIIMGRSYDGCASDIWSCGIIFFALLTGKLPFDDDNIRSLLLKVCQGQFEMPSNISPQAQHLLYRMLDVDSSTRITMEQIREHPFLSCFVHPNISIPIISAPIQPIDPLIVQHLSLVFRCSDDPMPLYEKLASQSPLVEKTLYTLLSRHLHPPSSAAVDRNRAVVDDLLGTAASNGQQMDEEEIEQAINIPTLAPYPISYAAESVPRPATSASPFLTPVTTSGTFNYSFNATNPQSILQRPATTSSAVPQLPKSVTPGLAYPHDSSMLSSNYRPPSALSPRNFNVSINDPEVQLSRRATSLDMSNDFRMNENDPSIVGNLAASNFPTGMGPPRKRVTSRMSEHTGNRVVSFPRGSAFNPRVTRFNVGNEQFSNNIDNNNYNQPYANATMNNSRRLRTPSGERSMRADLSQSPASYDSLNVPKHRRRQSLFSPSSTKKKLSGSPFQPKRSFLRRLFSSEPSCKCVYASLVASELEHEILEVLRRWQLLGIGIADIIYDSVSASISARIKRQNSLNLKPVRFRISVLAEFFGSQAVFVLESGSSTTFDHLATEFQLIFEDKGFLDNLELSYFQASASRPVSRMSVSSSPFAVFRQRQSVQS.

The Protein kinase domain occupies 10-262 (WELGLSLGSG…MEQIREHPFL (253 aa)). ATP is bound by residues 16 to 24 (LGSGGPNSS) and Lys-39. Asp-133 acts as the Proton acceptor in catalysis. Ser-309, Ser-311, and Ser-476 each carry phosphoserine. Residues 549-563 (NNIDNNNYNQPYANA) show a composition bias toward low complexity. The segment at 549-620 (NNIDNNNYNQ…TKKKLSGSPF (72 aa)) is disordered. Residues 584–593 (LSQSPASYDS) show a composition bias toward polar residues. Ser-587 and Ser-632 each carry phosphoserine.

This sequence belongs to the protein kinase superfamily. CAMK Ser/Thr protein kinase family. NIM1 subfamily. As to quaternary structure, interacts with blt1 and mid1. In terms of processing, autophosphorylated.

It catalyses the reaction L-seryl-[protein] + ATP = O-phospho-L-seryl-[protein] + ADP + H(+). It carries out the reaction L-threonyl-[protein] + ATP = O-phospho-L-threonyl-[protein] + ADP + H(+). In terms of biological role, acts as a mitotic inducer. In G2 it negatively regulates wee1, a mitotic inhibitor. Also has a role in cytokinesis where it required for proper septum formation. This Schizosaccharomyces pombe (strain 972 / ATCC 24843) (Fission yeast) protein is Mitosis inducer protein kinase cdr2 (cdr2).